A 220-amino-acid chain; its full sequence is Translation initiation factor IF-3 (220 aa).

The disordered stretch occupies residues 182–220 (TPLVKKDDKEEPATRAVRTITAPPRPTSARLASKPAGNG). The segment covering 185–194 (VKKDDKEEPA) has biased composition (basic and acidic residues).

This sequence belongs to the IF-3 family. Monomer.

The protein localises to the cytoplasm. IF-3 binds to the 30S ribosomal subunit and shifts the equilibrium between 70S ribosomes and their 50S and 30S subunits in favor of the free subunits, thus enhancing the availability of 30S subunits on which protein synthesis initiation begins. This Synechococcus sp. (strain WH7803) protein is Translation initiation factor IF-3.